A 355-amino-acid polypeptide reads, in one-letter code: Endonuclease III homolog (355 aa).

Positions 44–50 match the Nuclear localization signal motif; it reads PKKFRFQ. In terms of domain architecture, HhH spans 122–149; sequence FQGDIPDTVEDLMTLPGVGPKMGYLCMS. Catalysis depends on Lys-142, which acts as the Nucleophile; for N-glycosylase activity. Positions 210, 217, 220, and 228 each coordinate [4Fe-4S] cluster. The Nuclear localization signal motif lies at 252–255; it reads KKRP. A disordered region spans residues 303-355; the sequence is KEPAADIDVDQKPPVAFHSTTKETRSLRRSKRVAKKSSQYFSQQSLQDIEDLV. The span at 338–349 shows a compositional bias: polar residues; that stretch reads KSSQYFSQQSLQ.

This sequence belongs to the Nth/MutY family. Requires [4Fe-4S] cluster as cofactor.

The protein localises to the nucleus. The protein resides in the mitochondrion. It carries out the reaction 2'-deoxyribonucleotide-(2'-deoxyribose 5'-phosphate)-2'-deoxyribonucleotide-DNA = a 3'-end 2'-deoxyribonucleotide-(2,3-dehydro-2,3-deoxyribose 5'-phosphate)-DNA + a 5'-end 5'-phospho-2'-deoxyribonucleoside-DNA + H(+). In terms of biological role, bifunctional DNA N-glycosylase with associated apurinic/apyrimidinic (AP) lyase function that catalyzes the first step in base excision repair (BER), the primary repair pathway for the repair of oxidative DNA damage. The DNA N-glycosylase activity releases the damaged DNA base from DNA by cleaving the N-glycosidic bond, leaving an AP site. The AP-lyase activity cleaves the phosphodiester bond 3' to the AP site by a beta-elimination. Primarily recognizes and repairs oxidative base damage of pyrimidines. Also has 8-oxo-7,8-dihydroguanine (8-oxoG) DNA glycosylase activity. Also involved in the repair of 7-methylguanine lesions, although it cannot directly repair alkylated DNA bases. Probably does so via excision of methylformamidopyrimidine (mFapy) lesions, a spontaneous processing product of 7-methylguanine. This chain is Endonuclease III homolog (nth1), found in Schizosaccharomyces pombe (strain 972 / ATCC 24843) (Fission yeast).